Reading from the N-terminus, the 109-residue chain is Small ribosomal subunit protein bS18c (109 aa).

Positions glycine 82–phenylalanine 109 are disordered.

The protein belongs to the bacterial ribosomal protein bS18 family. As to quaternary structure, part of the 30S ribosomal subunit.

It is found in the plastid. This is Small ribosomal subunit protein bS18c from Cuscuta reflexa (Southern Asian dodder).